The sequence spans 198 residues: SOSS complex subunit B2 (198 aa).

The segment at residues 26–89 is a DNA-binding region (OB); that stretch reads IVLEIGRVTK…SMWKGCLTLY (64 aa). The segment at 114–198 is disordered; it reads EPNPDYRGQQ…ARDPRRAFKR (85 aa). Polar residues-rich tracts occupy residues 136 to 151 and 173 to 188; these read STNT…QTGP and LPGT…TISN.

The protein belongs to the SOSS-B family. SOSS-B2 subfamily. As to quaternary structure, component of the SOSS complex, composed of SOSS-B (SOSS-B1/NABP2 or SOSS-B2/NABP1), SOSS-A/INTS3 and SOSS-C/INIP. SOSS complexes containing SOSS-B1/NABP2 are more abundant than complexes containing SOSS-B2/NABP1. As to expression, ubiquitous with high expression in the thymus.

It localises to the nucleus. Its function is as follows. Component of the SOSS complex, a multiprotein complex that functions downstream of the MRN complex to promote DNA repair and G2/M checkpoint. In the SOSS complex, acts as a sensor of single-stranded DNA that binds to single-stranded DNA, in particular to polypyrimidines. The SOSS complex associates with DNA lesions and influences diverse endpoints in the cellular DNA damage response including cell-cycle checkpoint activation, recombinational repair and maintenance of genomic stability. Required for efficient homologous recombination-dependent repair of double-strand breaks (DSBs) and ATM-dependent signaling pathways. The polypeptide is SOSS complex subunit B2 (Nabp1) (Mus musculus (Mouse)).